The following is a 73-amino-acid chain: UPF0235 protein PERMA_1406 (73 aa).

This sequence belongs to the UPF0235 family.

The protein is UPF0235 protein PERMA_1406 of Persephonella marina (strain DSM 14350 / EX-H1).